We begin with the raw amino-acid sequence, 363 residues long: Dual-specificity RNA methyltransferase RlmN (363 aa).

The active-site Proton acceptor is E102. The 242-residue stretch at 108–349 (EKKRATLCVS…KNRGQDIGAA (242 aa)) folds into the Radical SAM core domain. C115 and C350 form a disulfide bridge. C122, C126, and C129 together coordinate [4Fe-4S] cluster. S-adenosyl-L-methionine contacts are provided by residues 174–175 (GE), S206, 228–230 (SLH), and N307. C350 acts as the S-methylcysteine intermediate in catalysis.

The protein belongs to the radical SAM superfamily. RlmN family. [4Fe-4S] cluster is required as a cofactor.

The protein localises to the cytoplasm. It catalyses the reaction adenosine(2503) in 23S rRNA + 2 reduced [2Fe-2S]-[ferredoxin] + 2 S-adenosyl-L-methionine = 2-methyladenosine(2503) in 23S rRNA + 5'-deoxyadenosine + L-methionine + 2 oxidized [2Fe-2S]-[ferredoxin] + S-adenosyl-L-homocysteine. It carries out the reaction adenosine(37) in tRNA + 2 reduced [2Fe-2S]-[ferredoxin] + 2 S-adenosyl-L-methionine = 2-methyladenosine(37) in tRNA + 5'-deoxyadenosine + L-methionine + 2 oxidized [2Fe-2S]-[ferredoxin] + S-adenosyl-L-homocysteine. Its function is as follows. Specifically methylates position 2 of adenine 2503 in 23S rRNA and position 2 of adenine 37 in tRNAs. m2A2503 modification seems to play a crucial role in the proofreading step occurring at the peptidyl transferase center and thus would serve to optimize ribosomal fidelity. This Buchnera aphidicola subsp. Schizaphis graminum (strain Sg) protein is Dual-specificity RNA methyltransferase RlmN.